We begin with the raw amino-acid sequence, 200 residues long: Recombination protein RecR (200 aa).

A C4-type zinc finger spans residues 57-72; the sequence is CRQCRTLTEDDLCPQC. A Toprim domain is found at 80-175; that stretch reads TLLCVVEGPM…IASRIAHGVP (96 aa).

This sequence belongs to the RecR family.

Its function is as follows. May play a role in DNA repair. It seems to be involved in an RecBC-independent recombinational process of DNA repair. It may act with RecF and RecO. The sequence is that of Recombination protein RecR from Pseudomonas fluorescens (strain Pf0-1).